The chain runs to 77 residues: Putative antitoxin VapB3 (77 aa).

A coiled-coil region spans residues 10–60; it reads RRGLKKELEELGINYAEAVRKFLEELVARERRRRALERARALREELRKKGA.

In terms of assembly, forms a complex with putative toxin VapC3, possibly VapB(2)-VapC(2).

Its function is as follows. Antitoxin component of a type II toxin-antitoxin (TA) system. This is Putative antitoxin VapB3 (vAPb3) from Pyrobaculum aerophilum (strain ATCC 51768 / DSM 7523 / JCM 9630 / CIP 104966 / NBRC 100827 / IM2).